Reading from the N-terminus, the 527-residue chain is Bifunctional methyltransferase (527 aa).

Residues 1-309 are hemK; the sequence is MQYSIKQVLS…GHSRVILFSP (309 aa). Positions 1 to 311 are RF MTase; sequence MQYSIKQVLS…SRVILFSPIN (311 aa). S-adenosyl-L-methionine is bound by residues 149 to 153, D172, W201, N216, E356, E381, N408, and D430; that span reads GTGSG. 216–219 contacts substrate; it reads NPPY. The tRNA (guanine-N(7)-)-methyltransferase stretch occupies residues 310-527; sequence INLNRSYARR…IILQHVSGDH (218 aa). The tract at residues 314 to 527 is tRNA MTase; the sequence is RSYARRIGKS…IILQHVSGDH (214 aa). D430 is an active-site residue. The substrate site is built by K434 and D466.

In the C-terminal section; belongs to the class I-like SAM-binding methyltransferase superfamily. TrmB family. It in the N-terminal section; belongs to the protein N5-glutamine methyltransferase family. PrmC subfamily.

It catalyses the reaction L-glutaminyl-[peptide chain release factor] + S-adenosyl-L-methionine = N(5)-methyl-L-glutaminyl-[peptide chain release factor] + S-adenosyl-L-homocysteine + H(+). The enzyme catalyses guanosine(46) in tRNA + S-adenosyl-L-methionine = N(7)-methylguanosine(46) in tRNA + S-adenosyl-L-homocysteine. In terms of biological role, methylates the class 1 translation termination release factors RF1/PrfA and RF2/PrfB on the glutamine residue of the universally conserved GGQ motif. Functionally, catalyzes the formation of N(7)-methylguanine at position 46 (m7G46) in tRNA. The protein is Bifunctional methyltransferase (prmC/trmB) of Rickettsia felis (strain ATCC VR-1525 / URRWXCal2) (Rickettsia azadi).